A 69-amino-acid chain; its full sequence is Protein SlyX homolog (69 aa).

The protein belongs to the SlyX family.

The polypeptide is Protein SlyX homolog (Pseudomonas paraeruginosa (strain DSM 24068 / PA7) (Pseudomonas aeruginosa (strain PA7))).